A 949-amino-acid chain; its full sequence is Sensor histidine kinase RcsC (949 aa).

The Cytoplasmic portion of the chain corresponds to 1–19; it reads MKYLASFRTTLKASRYMFR. The chain crosses the membrane as a helical span at residues 20–41; sequence ALALVLWLLIAFSSVFYIVNAL. Topologically, residues 42–313 are periplasmic; that stretch reads HQRESEIRQE…PVDKVLERIR (272 aa). The chain crosses the membrane as a helical span at residues 314–335; that stretch reads MVILNAILLNVLAGAALFTLAR. Over 336-949 the chain is Cytoplasmic; that stretch reads MYERRIFIPA…AERVRKSRES (614 aa). The PAS domain occupies 357–425; the sequence is QFNRKIVASA…VLTSNNTNLQ (69 aa). The Histidine kinase domain maps to 476 to 692; the sequence is TVSHELRTPL…QFTVRIPLYG (217 aa). Histidine 479 bears the Phosphohistidine; by autocatalysis mark. One can recognise an ABL domain in the interval 705–805; that stretch reads SGKRCWLAVR…ARIYLIEMES (101 aa). The region spanning 826–940 is the Response regulatory domain; it reads MILVVDDHPI…VIKQTLTVYA (115 aa). A 4-aspartylphosphate modification is found at aspartate 875.

The protein belongs to the RcsC family. As to quaternary structure, interacts with RcsD. Autophosphorylated. Activation probably requires a transfer of a phosphate group from a His in the transmitter domain to an Asp in the receiver domain.

The protein localises to the cell inner membrane. The catalysed reaction is ATP + protein L-histidine = ADP + protein N-phospho-L-histidine.. Its function is as follows. Component of the Rcs signaling system, which controls transcription of numerous genes. RcsC functions as a membrane-associated protein kinase that phosphorylates RcsD in response to environmental signals. The phosphoryl group is then transferred to the response regulator RcsB. Involved in regulation of K30 capsular polysaccharide synthesis. The polypeptide is Sensor histidine kinase RcsC (Escherichia coli).